A 109-amino-acid chain; its full sequence is Irditoxin subunit A (109 aa).

The N-terminal stretch at 1–19 (MKTLLLAVAVVAFVCLGSA) is a signal peptide. Positions 20-34 (DQLGLGRQQIDWGQG) are excised as a propeptide. Residue Gln-35 is modified to Pyrrolidone carboxylic acid. Disulfide bonds link Cys-44–Cys-66, Cys-47–Cys-55, Cys-61–Cys-85, Cys-89–Cys-100, and Cys-101–Cys-106.

It belongs to the three-finger toxin family. Ancestral subfamily. Boigatoxin sub-subfamily. In terms of assembly, heterodimer of A and B chains; disulfide-linked. In terms of tissue distribution, expressed by the venom gland.

It localises to the secreted. Functionally, this bird and reptile-specific postsynaptic neurotoxin inhibits the chick muscle alpha-1-beta-1-gamma-delta (CHRNA1-CHRNB1-CHRNG-CHNRD) nicotinic acetylcholine receptor (nAChR) 100-fold more compared with the mouse receptor. In vivo, produces rapid flaccid paralysis, dyspnea and increased respiratory rate in geckos. At sublethal doses geckos were immobilized for up to three days and then recovered. Chicks injected with lethal doses showed rapid onset of inactivity, dyspnea and neck droop, and no extended paralysis with survival was seen. This Boiga irregularis (Brown tree snake) protein is Irditoxin subunit A.